The chain runs to 394 residues: Aspergillopepsin-1 (394 aa).

Positions 1–20 are cleaved as a signal peptide; sequence MVVFSKTAALVLGLSSAVSA. Positions 21–69 are cleaved as a propeptide — activation peptide; sequence APAPTRKGFTINQIARPANKTRTINLPGMYARSLAKFGGTVPQSVKEAA. The Peptidase A1 domain occupies 85 to 391; that stretch reads YLTPVTVGKS…NSEGPKLGFA (307 aa). Catalysis depends on residues D101 and D283. C319 and C354 are oxidised to a cystine.

It belongs to the peptidase A1 family. As to quaternary structure, monomer.

It localises to the secreted. The enzyme catalyses Hydrolysis of proteins with broad specificity. Generally favors hydrophobic residues in P1 and P1', but also accepts Lys in P1, which leads to activation of trypsinogen. Does not clot milk.. Secreted aspartic endopeptidase that allows assimilation of proteinaceous substrates. The scissile peptide bond is attacked by a nucleophilic water molecule activated by two aspartic residues in the active site. Shows a broad primary substrate specificity. Favors hydrophobic residues at the P1 and P1' positions, but also accepts a lysine residue in the P1 position, leading to the activation of trypsinogen and chymotrypsinogen A. The chain is Aspergillopepsin-1 (pepA) from Aspergillus niger (strain ATCC MYA-4892 / CBS 513.88 / FGSC A1513).